Reading from the N-terminus, the 156-residue chain is MRGDKETTNWLNKSLMKQARQKKLSIIAVGVLSTVAVTVGYLLYLYRGQRNPNIRDVKPKSKCYVLTQDLFDKIENWQEELSKDSVMLVLPEVAHLGNHLKLQLSSIEHKIVIFNNSSAVWSAVRHLKKYELVISRDKTSDMPVDLRRYVGQISHI.

The helical transmembrane segment at 24–46 (LSIIAVGVLSTVAVTVGYLLYLY) threads the bilayer.

This sequence belongs to the peroxin-22 family.

The protein resides in the peroxisome membrane. Functionally, involved in peroxisome biogenesis. This chain is Peroxisome assembly protein 22 (PEX22), found in Kluyveromyces lactis (strain ATCC 8585 / CBS 2359 / DSM 70799 / NBRC 1267 / NRRL Y-1140 / WM37) (Yeast).